The sequence spans 236 residues: THO complex subunit 7B (236 aa).

A coiled-coil region spans residues 99–228; the sequence is EANLREKESF…IRSASEDQRN (130 aa).

The protein belongs to the THOC7 family. As to quaternary structure, component of the THO complex, which is composed of THO1, THO2, THO3, THO5, THO6 and THO7.

It localises to the nucleus. In terms of biological role, acts as a component of the THO subcomplex of the TREX complex which is thought to couple mRNA transcription, processing and nuclear export. The polypeptide is THO complex subunit 7B (THO7B) (Arabidopsis thaliana (Mouse-ear cress)).